A 129-amino-acid chain; its full sequence is Lysozyme C (129 aa).

One can recognise a C-type lysozyme domain in the interval 1–129 (KVYGRCELAA…VQAWIRGCRL (129 aa)). 4 disulfides stabilise this stretch: C6–C127, C30–C115, C64–C80, and C76–C94. Catalysis depends on residues E35 and D52.

This sequence belongs to the glycosyl hydrolase 22 family. In terms of assembly, monomer.

The protein localises to the secreted. The catalysed reaction is Hydrolysis of (1-&gt;4)-beta-linkages between N-acetylmuramic acid and N-acetyl-D-glucosamine residues in a peptidoglycan and between N-acetyl-D-glucosamine residues in chitodextrins.. Its function is as follows. Lysozymes have primarily a bacteriolytic function; those in tissues and body fluids are associated with the monocyte-macrophage system and enhance the activity of immunoagents. This is Lysozyme C (LYZ) from Tragopan satyra (Satyr tragopan).